Consider the following 328-residue polypeptide: Malate dehydrogenase (328 aa).

13 to 19 (GGTGQIA) contributes to the NAD(+) binding site. Substrate-binding residues include arginine 94 and arginine 100. Residues asparagine 107, glutamine 114, and 131–133 (VGN) contribute to the NAD(+) site. 2 residues coordinate substrate: asparagine 133 and arginine 164. Residue histidine 189 is the Proton acceptor of the active site.

It belongs to the LDH/MDH superfamily. MDH type 2 family.

It catalyses the reaction (S)-malate + NAD(+) = oxaloacetate + NADH + H(+). Its function is as follows. Catalyzes the reversible oxidation of malate to oxaloacetate. This Chlamydia felis (strain Fe/C-56) (Chlamydophila felis) protein is Malate dehydrogenase.